The primary structure comprises 488 residues: Ribulose bisphosphate carboxylase large chain 1 (488 aa).

Asn-128 and Thr-178 together coordinate substrate. Lys-180 functions as the Proton acceptor in the catalytic mechanism. Residue Lys-182 participates in substrate binding. Mg(2+) is bound by residues Lys-206, Asp-208, and Glu-209. Lys-206 is modified (N6-carboxylysine). Residue His-298 is the Proton acceptor of the active site. The substrate site is built by Arg-299, His-331, and Ser-383.

It belongs to the RuBisCO large chain family. Type I subfamily. As to quaternary structure, heterohexadecamer of 8 large chains and 8 small chains. Requires Mg(2+) as cofactor.

It catalyses the reaction 2 (2R)-3-phosphoglycerate + 2 H(+) = D-ribulose 1,5-bisphosphate + CO2 + H2O. The catalysed reaction is D-ribulose 1,5-bisphosphate + O2 = 2-phosphoglycolate + (2R)-3-phosphoglycerate + 2 H(+). RuBisCO catalyzes two reactions: the carboxylation of D-ribulose 1,5-bisphosphate, the primary event in carbon dioxide fixation, as well as the oxidative fragmentation of the pentose substrate. Both reactions occur simultaneously and in competition at the same active site. In Nitrobacter hamburgensis (strain DSM 10229 / NCIMB 13809 / X14), this protein is Ribulose bisphosphate carboxylase large chain 1.